The sequence spans 151 residues: Protein Turandot Z (151 aa).

Positions 1–23 (MSRLIHLSFVLALLACLTGPISA) are cleaved as a signal peptide.

This sequence belongs to the Turandot family.

The protein localises to the secreted. A humoral factor that may play a role in stress tolerance. In Drosophila pseudoobscura pseudoobscura (Fruit fly), this protein is Protein Turandot Z.